We begin with the raw amino-acid sequence, 584 residues long: Putative poly(A) polymerase catalytic subunit (584 aa).

Basic and acidic residues predominate over residues 522-531 (EAEISEKEET). The interval 522–584 (EAEISEKEET…ENSLDSLTSD (63 aa)) is disordered. A compositionally biased stretch (low complexity) spans 546–569 (SPNSSPNSSPNNSLNNSIDISTNN).

The protein belongs to the poxviridae poly(A) polymerase catalytic subunit family. Highly divergent.

It localises to the virion. The catalysed reaction is RNA(n) + ATP = RNA(n)-3'-adenine ribonucleotide + diphosphate. Its function is as follows. Polymerase that creates the 3'-poly(A) tail of mRNA's. The chain is Putative poly(A) polymerase catalytic subunit from Acanthamoeba polyphaga (Amoeba).